The chain runs to 345 residues: Phenylalanine--tRNA ligase alpha subunit (345 aa).

Residue Glu-253 coordinates Mg(2+).

Belongs to the class-II aminoacyl-tRNA synthetase family. Phe-tRNA synthetase alpha subunit type 1 subfamily. Tetramer of two alpha and two beta subunits. Mg(2+) serves as cofactor.

The protein resides in the cytoplasm. The catalysed reaction is tRNA(Phe) + L-phenylalanine + ATP = L-phenylalanyl-tRNA(Phe) + AMP + diphosphate + H(+). The chain is Phenylalanine--tRNA ligase alpha subunit from Nitratidesulfovibrio vulgaris (strain DSM 19637 / Miyazaki F) (Desulfovibrio vulgaris).